Consider the following 291-residue polypeptide: Cytochrome c-552 (291 aa).

The signal sequence occupies residues 1-23 (MKKTLMASAVGAVIAFGTHGAMA). Residues cysteine 68, cysteine 71, histidine 72, cysteine 157, cysteine 161, and histidine 162 each contribute to the heme c site.

Binds 2 heme c groups per subunit.

It is found in the periplasm. Functionally, may play a role in nitrite reduction. Shows peroxidase activity on proteolytic modification. In Stutzerimonas stutzeri (Pseudomonas stutzeri), this protein is Cytochrome c-552 (nirB).